Consider the following 241-residue polypeptide: 4-hydroxy-tetrahydrodipicolinate reductase (241 aa).

NAD(+) contacts are provided by residues 80-82 and 104-107; these read ATT and SANM. Catalysis depends on His136, which acts as the Proton donor/acceptor. His137 is a (S)-2,3,4,5-tetrahydrodipicolinate binding site. The Proton donor role is filled by Lys140. (S)-2,3,4,5-tetrahydrodipicolinate is bound at residue 146–147; that stretch reads GT.

This sequence belongs to the DapB family.

It is found in the cytoplasm. It catalyses the reaction (S)-2,3,4,5-tetrahydrodipicolinate + NAD(+) + H2O = (2S,4S)-4-hydroxy-2,3,4,5-tetrahydrodipicolinate + NADH + H(+). It carries out the reaction (S)-2,3,4,5-tetrahydrodipicolinate + NADP(+) + H2O = (2S,4S)-4-hydroxy-2,3,4,5-tetrahydrodipicolinate + NADPH + H(+). Its pathway is amino-acid biosynthesis; L-lysine biosynthesis via DAP pathway; (S)-tetrahydrodipicolinate from L-aspartate: step 4/4. Catalyzes the conversion of 4-hydroxy-tetrahydrodipicolinate (HTPA) to tetrahydrodipicolinate. The polypeptide is 4-hydroxy-tetrahydrodipicolinate reductase (Staphylococcus haemolyticus (strain JCSC1435)).